The chain runs to 350 residues: Melatonin receptor type 1A (350 aa).

Residues 1-29 lie on the Extracellular side of the membrane; that stretch reads MQGNGSALPNASQPVLRGDGARPSWLASA. Asn4 and Asn10 each carry an N-linked (GlcNAc...) asparagine glycan. The chain crosses the membrane as a helical span at residues 30–50; it reads LACVLIFTIVVDILGNLLVIL. The Cytoplasmic segment spans residues 51–63; it reads SVYRNKKLRNAGN. Residues 64–84 form a helical membrane-spanning segment; that stretch reads IFVVSLAVADLVVAIYPYPLV. Residues 85–102 lie on the Extracellular side of the membrane; the sequence is LMSIFNNGWNLGYLHCQV. Cysteines 100 and 177 form a disulfide. A helical membrane pass occupies residues 103–123; the sequence is SGFLMGLSVIGSIFNITGIAI. Residues 124–142 lie on the Cytoplasmic side of the membrane; it reads NRYCYICHSLKYDKLYSSK. A helical membrane pass occupies residues 143–163; it reads NSLCYVLLIWLLTLAAVLPNL. Melatonin contacts are provided by Asn162 and Gln181. Residues 164–187 are Extracellular-facing; sequence RAGTLQYDPRIYSCTFAQSVSSAY. A helical membrane pass occupies residues 188-208; the sequence is TIAVVVFHFLVPMIIVIFCYL. The Cytoplasmic segment spans residues 209-240; that stretch reads RIWILVLQVRQRVKPDRKPKLKPQDFRNFVTM. Residues 241-261 form a helical membrane-spanning segment; the sequence is FVVFVLFAICWAPLNFIGLAV. The Extracellular portion of the chain corresponds to 262–274; the sequence is ASDPASMVPRIPE. Residues 275 to 295 form a helical membrane-spanning segment; that stretch reads WLFVASYYMAYFNSCLNAIIY. The Cytoplasmic segment spans residues 296–350; it reads GLLNQNFRKEYRRIIVSLCTARVFFVDSSNDVADRVKWKPSPLMTNNNVVKVDSV.

It belongs to the G-protein coupled receptor 1 family. As to expression, expressed in hypophyseal pars tuberalis and hypothalamic suprachiasmatic nuclei (SCN). Hippocampus.

Its subcellular location is the cell membrane. High affinity receptor for melatonin. Likely to mediate the reproductive and circadian actions of melatonin. The activity of this receptor is mediated by pertussis toxin sensitive G proteins that inhibit adenylate cyclase activity. Possibly involved in sleep induction, by melatonin activation of the potassium channel KCNMA1/BK and the dissociation of G-beta and G-gamma subunits, thereby decreasing synaptic transmission. In Homo sapiens (Human), this protein is Melatonin receptor type 1A (MTNR1A).